Reading from the N-terminus, the 224-residue chain is Type VII secretion system protein EsaE (224 aa).

As to quaternary structure, interacts with EssD.

Its function is as follows. Component of the type VII secretion system (Ess). Plays a role in Esx protein secretion. Plays an essential role in the processing and secretion of EssD. The protein is Type VII secretion system protein EsaE of Staphylococcus aureus (strain USA300).